The chain runs to 459 residues: Vasoactive intestinal polypeptide receptor 1 (459 aa).

An N-terminal signal peptide occupies residues M1–A30. Topologically, residues A31–A142 are extracellular. 5 disulfides stabilise this stretch: C37–C209, C50–C72, C63–C105, C86–C122, and C216–C286. N-linked (GlcNAc...) asparagine glycosylation is found at N58, N69, N100, and N104. The helical transmembrane segment at V143 to L167 threads the bilayer. The Cytoplasmic segment spans residues F168 to R175. Residues N176 to D197 form a helical membrane-spanning segment. At M198–K217 the chain is on the extracellular side. A helical membrane pass occupies residues A218–H242. At T243–Y255 the chain is on the cytoplasmic side. A helical transmembrane segment spans residues F256–V277. The Extracellular portion of the chain corresponds to R278–S293. N-linked (GlcNAc...) asparagine glycosylation occurs at N292. Residues S294–I318 traverse the membrane as a helical segment. At R319 to R340 the chain is on the cytoplasmic side. The helical transmembrane segment at L341–F361 threads the bilayer. Residues F362–Q369 lie on the Extracellular side of the membrane. A helical membrane pass occupies residues V370 to L393. Over N394 to V459 the chain is Cytoplasmic.

This sequence belongs to the G-protein coupled receptor 2 family. Interacts with ADCYAP1/PACAP; activated by both PACAP27 and PACAP38 neuropeptides. Interacts with VIP; the interaction results in VIPR1 activation.

The protein resides in the cell membrane. In terms of biological role, g protein-coupled receptor activated by the neuropeptides vasoactive intestinal peptide (VIP) and pituitary adenylate cyclase-activating polypeptide (ADCYAP1/PACAP). Binds VIP and both PACAP27 and PACAP38 bioactive peptides with the following order of ligand affinity VIP = PACAP27 &gt; PACAP38. Ligand binding causes a conformation change that triggers signaling via guanine nucleotide-binding proteins (G proteins) and modulates the activity of downstream effectors. Activates cAMP-dependent pathway. The polypeptide is Vasoactive intestinal polypeptide receptor 1 (Mus musculus (Mouse)).